Reading from the N-terminus, the 176-residue chain is 3-hydroxyacyl-[acyl-carrier-protein] dehydratase FabZ (176 aa).

The active site involves histidine 54.

The protein belongs to the thioester dehydratase family. FabZ subfamily.

The protein resides in the cytoplasm. The catalysed reaction is a (3R)-hydroxyacyl-[ACP] = a (2E)-enoyl-[ACP] + H2O. Functionally, involved in unsaturated fatty acids biosynthesis. Catalyzes the dehydration of short chain beta-hydroxyacyl-ACPs and long chain saturated and unsaturated beta-hydroxyacyl-ACPs. The protein is 3-hydroxyacyl-[acyl-carrier-protein] dehydratase FabZ of Yersinia pseudotuberculosis serotype O:1b (strain IP 31758).